The chain runs to 301 residues: 4-hydroxy-tetrahydrodipicolinate synthase (301 aa).

Position 57 (T57) interacts with pyruvate. Y143 functions as the Proton donor/acceptor in the catalytic mechanism. K171 (schiff-base intermediate with substrate) is an active-site residue. I211 contributes to the pyruvate binding site.

The protein belongs to the DapA family. As to quaternary structure, homotetramer; dimer of dimers.

It localises to the cytoplasm. The catalysed reaction is L-aspartate 4-semialdehyde + pyruvate = (2S,4S)-4-hydroxy-2,3,4,5-tetrahydrodipicolinate + H2O + H(+). The protein operates within amino-acid biosynthesis; L-lysine biosynthesis via DAP pathway; (S)-tetrahydrodipicolinate from L-aspartate: step 3/4. In terms of biological role, catalyzes the condensation of (S)-aspartate-beta-semialdehyde [(S)-ASA] and pyruvate to 4-hydroxy-tetrahydrodipicolinate (HTPA). The polypeptide is 4-hydroxy-tetrahydrodipicolinate synthase (Bifidobacterium longum (strain DJO10A)).